A 176-amino-acid polypeptide reads, in one-letter code: Probable fimbrial subunit LpfE (176 aa).

The N-terminal stretch at 1 to 23 (MKFKRLLHSGIASLSLVACGVNA) is a signal peptide.

The protein belongs to the fimbrial protein family.

The protein localises to the fimbrium. In terms of biological role, part of the lpfABCC'DE fimbrial operon. LP fimbriae may participate in the interaction with eukaryotic cells by assisting in microcolony formation. This chain is Probable fimbrial subunit LpfE (lpfE), found in Escherichia coli O157:H7.